Consider the following 349-residue polypeptide: Isopentenyl-diphosphate delta-isomerase (349 aa).

6–7 provides a ligand contact to substrate; sequence RK. FMN is bound by residues 62-64, S93, and N122; that span reads AMT. Residue Q152 participates in substrate binding. E153 lines the Mg(2+) pocket. Residues K184, T214, 258 to 259, and 280 to 281 each bind FMN; these read GG and AG.

The protein belongs to the IPP isomerase type 2 family. As to quaternary structure, homooctamer. Dimer of tetramers. FMN is required as a cofactor. NADPH serves as cofactor. Requires Mg(2+) as cofactor.

The protein resides in the cytoplasm. It catalyses the reaction isopentenyl diphosphate = dimethylallyl diphosphate. In terms of biological role, involved in the biosynthesis of isoprenoids. Catalyzes the 1,3-allylic rearrangement of the homoallylic substrate isopentenyl (IPP) to its allylic isomer, dimethylallyl diphosphate (DMAPP). This Bacillus cereus (strain ATCC 10987 / NRS 248) protein is Isopentenyl-diphosphate delta-isomerase.